The following is a 225-amino-acid chain: MKAFIVRVLLIFIGAILFIQLWIFSSLVWWRTHEVDTTMFMRIDYWSDTSEPIIHEWLDYDDISDNFKHAILAGEDAKFIHHHGFDWDGIRFALERNNEQGEVVAGGSTVSQQLAKNLFLYNKRSFIRKGQETVATWMMERMWSKRRILEVYMNSVEFGKNLYGVEAAAQYYYGKSAKNLTREQAAFLAALLPDPKYYQDHRNDRKLQYRKRVILRYMNSTQIPE.

A helical transmembrane segment spans residues 8-28 (VLLIFIGAILFIQLWIFSSLV).

Belongs to the glycosyltransferase 51 family.

It localises to the cell inner membrane. It catalyses the reaction [GlcNAc-(1-&gt;4)-Mur2Ac(oyl-L-Ala-gamma-D-Glu-L-Lys-D-Ala-D-Ala)](n)-di-trans,octa-cis-undecaprenyl diphosphate + beta-D-GlcNAc-(1-&gt;4)-Mur2Ac(oyl-L-Ala-gamma-D-Glu-L-Lys-D-Ala-D-Ala)-di-trans,octa-cis-undecaprenyl diphosphate = [GlcNAc-(1-&gt;4)-Mur2Ac(oyl-L-Ala-gamma-D-Glu-L-Lys-D-Ala-D-Ala)](n+1)-di-trans,octa-cis-undecaprenyl diphosphate + di-trans,octa-cis-undecaprenyl diphosphate + H(+). It participates in cell wall biogenesis; peptidoglycan biosynthesis. In terms of biological role, peptidoglycan polymerase that catalyzes glycan chain elongation from lipid-linked precursors. This Acinetobacter baumannii (strain ATCC 17978 / DSM 105126 / CIP 53.77 / LMG 1025 / NCDC KC755 / 5377) protein is Biosynthetic peptidoglycan transglycosylase.